We begin with the raw amino-acid sequence, 507 residues long: ATP synthase subunit alpha, chloroplastic (507 aa).

An ATP-binding site is contributed by Gly-170 to Thr-177. Thr-257 carries the phosphothreonine modification.

Belongs to the ATPase alpha/beta chains family. In terms of assembly, F-type ATPases have 2 components, CF(1) - the catalytic core - and CF(0) - the membrane proton channel. CF(1) has five subunits: alpha(3), beta(3), gamma(1), delta(1), epsilon(1). CF(0) has four main subunits: a, b, b' and c.

Its subcellular location is the plastid. It is found in the chloroplast thylakoid membrane. It catalyses the reaction ATP + H2O + 4 H(+)(in) = ADP + phosphate + 5 H(+)(out). Functionally, produces ATP from ADP in the presence of a proton gradient across the membrane. The alpha chain is a regulatory subunit. This is ATP synthase subunit alpha, chloroplastic from Capsella bursa-pastoris (Shepherd's purse).